A 447-amino-acid polypeptide reads, in one-letter code: T-box transcription factor TBX20 (447 aa).

A disordered region spans residues 62 to 81 (DAHGEFGGGSGSSPSSSSLC). Residues 109–288 (LWDKFHELGT…SNPFAKGFRD (180 aa)) constitute a DNA-binding region (T-box). The segment at 316 to 340 (TYGGEEDVLGDESQTTPNRGSAFTT) is disordered. Positions 327–340 (ESQTTPNRGSAFTT) are enriched in polar residues.

The protein resides in the nucleus. Functionally, acts as a transcriptional activator and repressor required for cardiac development and may have key roles in the maintenance of functional and structural phenotypes in adult heart. The protein is T-box transcription factor TBX20 (TBX20) of Homo sapiens (Human).